The chain runs to 419 residues: Multidrug efflux pump Tap (419 aa).

A run of 12 helical transmembrane segments spans residues Gly-7–Ala-29, Ala-44–Val-66, Arg-73–Gly-95, Ala-100–Thr-122, Ile-149–Ile-171, Trp-175–Gly-197, Phe-218–Leu-240, Leu-260–Ala-282, Val-289–Leu-308, Val-313–Val-335, Val-348–Leu-370, and Gly-375–Leu-397.

Belongs to the major facilitator superfamily. Drug:H(+) antiporter-3 (DHA3) (TC 2.A.1.21) family.

The protein localises to the cell inner membrane. With respect to regulation, inhibited by piperine, verapamil and verapamil analogs. Functionally, efflux pump that contributes to intrinsic antibiotic resistance. The pump uses the electrochemical gradient as a source of energy. Confers resistance to rifampicin. Confers low-level resistance to tetracycline and to several aminoglycosides, including streptomycin, gentamicin, 2'-N-ethylnetilmicin and 6'-N-ethylnetilmicin. The chain is Multidrug efflux pump Tap from Mycobacterium tuberculosis (strain ATCC 25618 / H37Rv).